A 950-amino-acid polypeptide reads, in one-letter code: Oxysterol-binding protein-related protein 1 (950 aa).

An interaction with RAB7A region spans residues 1–237 (MNTEAEQQLL…NKVIYKALKR (237 aa)). ANK repeat units lie at residues 47–76 (LGWT…EVNV), 80–109 (MGDT…DTTI), and 175–204 (LGNT…DPNL). One can recognise a PH domain in the interval 235 to 334 (LKRYEGPLWK…WLEAIEEHSA (100 aa)). The stretch at 430-463 (NFKLEQEQEKNKILSEALETLATEHHELEQSLVK) forms a coiled coil. The FFAT signature appears at 469 to 485 (SILSEDEFYDALSDSES). Ser-499 carries the post-translational modification Phosphoserine. A compositionally biased stretch (basic and acidic residues) spans 501–521 (EEEGEHLGSRKHRMSEEKDCG). Disordered regions lie at residues 501–527 (EEEG…DALS), 795–816 (KKNT…LDEM), and 881–913 (MENG…SEED). Residues 877 to 913 (DIRAMENGEIDQASEEKKRLEEKQRAARKNRSKSEED) adopt a coiled-coil conformation. Residues 890–901 (SEEKKRLEEKQR) show a composition bias toward basic and acidic residues.

Belongs to the OSBP family. In terms of assembly, interacts (via FFAT motif) with VAPA and VAPB. Interacts with the GTP-bound form of RAB7A. Interacts with OAS1B. Interacts (via FFAT motif) with MOSPD2 (via MSP domain).

The protein localises to the late endosome. Functionally, binds phospholipids; exhibits strong binding to phosphatidic acid and weak binding to phosphatidylinositol 3-phosphate. Stabilizes GTP-bound RAB7A on late endosomes/lysosomes and alters functional properties of late endocytic compartments via its interaction with RAB7A. Binds 25-hydroxycholesterol and cholesterol. The protein is Oxysterol-binding protein-related protein 1 of Homo sapiens (Human).